The sequence spans 296 residues: Glycine and tyrosine-rich protein (296 aa).

A signal peptide spans 1-18; the sequence is MKVLVTALIISFSTAVLT. The tract at residues 157–280 is disordered; it reads MESRLRPQAT…NQPEETPAPN (124 aa). Residues 172 to 264 are compositionally biased toward low complexity; it reads TGGQPSTGGK…STGGQPSTGG (93 aa).

In terms of tissue distribution, component of the acid-insoluble and acid-soluble organic matrix of calcified layers of the shell (at protein level).

Its subcellular location is the secreted. In Lottia gigantea (Giant owl limpet), this protein is Glycine and tyrosine-rich protein.